Here is a 245-residue protein sequence, read N- to C-terminus: tRNA (guanine-N(1)-)-methyltransferase (245 aa).

Residues G111 and 131–136 each bind S-adenosyl-L-methionine; that span reads IGDYVL.

This sequence belongs to the RNA methyltransferase TrmD family. Homodimer.

It localises to the cytoplasm. The catalysed reaction is guanosine(37) in tRNA + S-adenosyl-L-methionine = N(1)-methylguanosine(37) in tRNA + S-adenosyl-L-homocysteine + H(+). Functionally, specifically methylates guanosine-37 in various tRNAs. The chain is tRNA (guanine-N(1)-)-methyltransferase from Staphylococcus carnosus (strain TM300).